Consider the following 218-residue polypeptide: Probable nicotinate-nucleotide adenylyltransferase (218 aa).

Belongs to the NadD family.

The enzyme catalyses nicotinate beta-D-ribonucleotide + ATP + H(+) = deamido-NAD(+) + diphosphate. It participates in cofactor biosynthesis; NAD(+) biosynthesis; deamido-NAD(+) from nicotinate D-ribonucleotide: step 1/1. Functionally, catalyzes the reversible adenylation of nicotinate mononucleotide (NaMN) to nicotinic acid adenine dinucleotide (NaAD). This chain is Probable nicotinate-nucleotide adenylyltransferase, found in Sodalis glossinidius (strain morsitans).